The following is a 434-amino-acid chain: Trigger factor (434 aa).

The PPIase FKBP-type domain maps to 160–245; it reads GDKVKMNFVG…LTEVQAANLP (86 aa).

It belongs to the FKBP-type PPIase family. Tig subfamily.

It localises to the cytoplasm. The enzyme catalyses [protein]-peptidylproline (omega=180) = [protein]-peptidylproline (omega=0). Its function is as follows. Involved in protein export. Acts as a chaperone by maintaining the newly synthesized protein in an open conformation. Functions as a peptidyl-prolyl cis-trans isomerase. This is Trigger factor from Shewanella baltica (strain OS223).